A 220-amino-acid chain; its full sequence is Ribosomal RNA small subunit methyltransferase G (220 aa).

S-adenosyl-L-methionine-binding residues include G78, L83, and R144.

The protein belongs to the methyltransferase superfamily. RNA methyltransferase RsmG family.

It is found in the cytoplasm. The enzyme catalyses guanosine(527) in 16S rRNA + S-adenosyl-L-methionine = N(7)-methylguanosine(527) in 16S rRNA + S-adenosyl-L-homocysteine. Specifically methylates the N7 position of guanine in position 527 of 16S rRNA. This Alkalilimnicola ehrlichii (strain ATCC BAA-1101 / DSM 17681 / MLHE-1) protein is Ribosomal RNA small subunit methyltransferase G.